The following is a 288-amino-acid chain: Diaminopimelate epimerase (288 aa).

Substrate contacts are provided by asparagine 17, glutamine 47, and asparagine 67. Catalysis depends on cysteine 76, which acts as the Proton donor. Substrate-binding positions include 77–78 (GN), asparagine 164, asparagine 197, and 215–216 (ER). The active-site Proton acceptor is cysteine 224. 225 to 226 (GS) serves as a coordination point for substrate.

It belongs to the diaminopimelate epimerase family. As to quaternary structure, homodimer.

Its subcellular location is the cytoplasm. The catalysed reaction is (2S,6S)-2,6-diaminopimelate = meso-2,6-diaminopimelate. Its pathway is amino-acid biosynthesis; L-lysine biosynthesis via DAP pathway; DL-2,6-diaminopimelate from LL-2,6-diaminopimelate: step 1/1. Functionally, catalyzes the stereoinversion of LL-2,6-diaminopimelate (L,L-DAP) to meso-diaminopimelate (meso-DAP), a precursor of L-lysine and an essential component of the bacterial peptidoglycan. This is Diaminopimelate epimerase from Rhodopseudomonas palustris (strain BisA53).